We begin with the raw amino-acid sequence, 593 residues long: Aspartate--tRNA ligase (593 aa).

Glutamate 180 is a binding site for L-aspartate. The tract at residues 204-207 (QIFK) is aspartate. Arginine 226 lines the L-aspartate pocket. ATP is bound by residues 226-228 (RDE) and glutamine 235. An L-aspartate-binding site is contributed by histidine 453. Residue glutamate 487 participates in ATP binding. Arginine 494 contributes to the L-aspartate binding site. 539–542 (GLDR) lines the ATP pocket.

Belongs to the class-II aminoacyl-tRNA synthetase family. Type 1 subfamily. As to quaternary structure, homodimer.

It localises to the cytoplasm. It carries out the reaction tRNA(Asp) + L-aspartate + ATP = L-aspartyl-tRNA(Asp) + AMP + diphosphate. In terms of biological role, catalyzes the attachment of L-aspartate to tRNA(Asp) in a two-step reaction: L-aspartate is first activated by ATP to form Asp-AMP and then transferred to the acceptor end of tRNA(Asp). This Clostridium botulinum (strain ATCC 19397 / Type A) protein is Aspartate--tRNA ligase.